The chain runs to 602 residues: Lysine--tRNA ligase, chloroplastic/mitochondrial (602 aa).

Residues 50–62 (SSSSSSATTAETS) show a composition bias toward low complexity. Residues 50 to 83 (SSSSSSATTAETSKPSGRNRRSASSSNSTSDREA) form a disordered region. Positions 136–214 (VSIAGRVVAR…SICVNSFSIL (79 aa)) form a DNA-binding region, OB. Substrate-binding residues include G285 and E309. ATP is bound by residues 331–333 (RNE) and 339–340 (HN). Residues E347 and Y349 each contribute to the substrate site. Ca(2+)-binding residues include E492 and E499. 499–500 (EM) contacts ATP. Residues N502 and E506 each contribute to the substrate site. Residues 524–543 (HNAKRAEAVRESPEPNAKKD) show a composition bias toward basic and acidic residues. The tract at residues 524 to 550 (HNAKRAEAVRESPEPNAKKDDDDDESY) is disordered. Residue 575-578 (GIDR) participates in ATP binding.

The protein belongs to the class-II aminoacyl-tRNA synthetase family. It depends on Ca(2+) as a cofactor.

It is found in the plastid. It localises to the chloroplast. The protein resides in the mitochondrion. It catalyses the reaction tRNA(Lys) + L-lysine + ATP = L-lysyl-tRNA(Lys) + AMP + diphosphate. In terms of biological role, catalyzes the specific attachment of an amino acid to its cognate tRNA in a 2 step reaction: the amino acid (AA) is first activated by ATP to form AA-AMP and then transferred to the acceptor end of the tRNA. In Arabidopsis thaliana (Mouse-ear cress), this protein is Lysine--tRNA ligase, chloroplastic/mitochondrial.